A 230-amino-acid chain; its full sequence is Octanoyltransferase (230 aa).

The 179-residue stretch at 40–218 folds into the BPL/LPL catalytic domain; that stretch reads PSLDDVLILL…CFAEVFGVEL (179 aa). Substrate-binding positions include 82 to 89, 149 to 151, and 162 to 164; these read RGGEVTYH, AIG, and GFA. Cysteine 180 (acyl-thioester intermediate) is an active-site residue.

It belongs to the LipB family.

It localises to the cytoplasm. It catalyses the reaction octanoyl-[ACP] + L-lysyl-[protein] = N(6)-octanoyl-L-lysyl-[protein] + holo-[ACP] + H(+). The protein operates within protein modification; protein lipoylation via endogenous pathway; protein N(6)-(lipoyl)lysine from octanoyl-[acyl-carrier-protein]: step 1/2. Its function is as follows. Catalyzes the transfer of endogenously produced octanoic acid from octanoyl-acyl-carrier-protein onto the lipoyl domains of lipoate-dependent enzymes. Lipoyl-ACP can also act as a substrate although octanoyl-ACP is likely to be the physiological substrate. The protein is Octanoyltransferase of Nostoc punctiforme (strain ATCC 29133 / PCC 73102).